The following is a 179-amino-acid chain: Ribosome maturation factor RimM (179 aa).

Residues 102 to 179 (DGEYYWYQLE…EMKVDWDADF (78 aa)) form the PRC barrel domain.

Belongs to the RimM family. Binds ribosomal protein uS19.

The protein localises to the cytoplasm. In terms of biological role, an accessory protein needed during the final step in the assembly of 30S ribosomal subunit, possibly for assembly of the head region. Essential for efficient processing of 16S rRNA. May be needed both before and after RbfA during the maturation of 16S rRNA. It has affinity for free ribosomal 30S subunits but not for 70S ribosomes. The polypeptide is Ribosome maturation factor RimM (Pseudomonas syringae pv. syringae (strain B728a)).